The primary structure comprises 850 residues: Bifunctional uridylyltransferase/uridylyl-removing enzyme (850 aa).

A uridylyltransferase region spans residues 1–317; the sequence is MSARPFADLR…LFPVVAPPLP (317 aa). Residues 318–673 form a uridylyl-removing region; sequence IDDDFQLRAG…ARLSPAGEGI (356 aa). One can recognise an HD domain in the interval 436–558; it reads VDEHILTVLR…VGDTRRLDAL (123 aa). 2 ACT domains span residues 674–755 and 783–850; these read QVMV…AVQP and VLSI…GVLG.

This sequence belongs to the GlnD family. Requires Mg(2+) as cofactor.

It carries out the reaction [protein-PII]-L-tyrosine + UTP = [protein-PII]-uridylyl-L-tyrosine + diphosphate. It catalyses the reaction [protein-PII]-uridylyl-L-tyrosine + H2O = [protein-PII]-L-tyrosine + UMP + H(+). Uridylyltransferase (UTase) activity is inhibited by glutamine, while glutamine activates uridylyl-removing (UR) activity. In terms of biological role, modifies, by uridylylation and deuridylylation, the PII regulatory proteins (GlnB and homologs), in response to the nitrogen status of the cell that GlnD senses through the glutamine level. Under low glutamine levels, catalyzes the conversion of the PII proteins and UTP to PII-UMP and PPi, while under higher glutamine levels, GlnD hydrolyzes PII-UMP to PII and UMP (deuridylylation). Thus, controls uridylylation state and activity of the PII proteins, and plays an important role in the regulation of nitrogen assimilation and metabolism. This chain is Bifunctional uridylyltransferase/uridylyl-removing enzyme, found in Thiobacillus denitrificans (strain ATCC 25259 / T1).